We begin with the raw amino-acid sequence, 198 residues long: 3-isopropylmalate dehydratase small subunit (198 aa).

This sequence belongs to the LeuD family. LeuD type 1 subfamily. As to quaternary structure, heterodimer of LeuC and LeuD.

It carries out the reaction (2R,3S)-3-isopropylmalate = (2S)-2-isopropylmalate. Its pathway is amino-acid biosynthesis; L-leucine biosynthesis; L-leucine from 3-methyl-2-oxobutanoate: step 2/4. Catalyzes the isomerization between 2-isopropylmalate and 3-isopropylmalate, via the formation of 2-isopropylmaleate. The sequence is that of 3-isopropylmalate dehydratase small subunit from Corynebacterium jeikeium (strain K411).